Consider the following 447-residue polypeptide: MEAYIRQKRATPGMVQASDLQLVRPMSGVNRNGREVHAYDGPMQFMMSPTNPDQIMPTSPVGPVPTVAVGGTGPNVTATSITTTPTSPYSDSTMEKLTPSSQDSEDEESTPVDVLPLPASTKSPANGGAGGAILYDRPTVDGHHLLSHSAPISPALNNNNHTHHTNSSSGNVKSSEDSGTPPSGGGGGAPDTEGDVIGPIEQWVTQPAAQGVLYKCRITRDRKGMDRGLFPIYYLHLERDYGKKLFCLAGRKRKKSKTSNYIISCDPTDLSRQADGFVGKLRSNVFGTTFFVYDSGTKNDAAAPRLDLAVVIYDTNILGFKGPRNMTVLLPGMTEDDQRVQISSVDDQQGLLDCWKSKNMDNVVELHNKTPIWNDETQSYVLNFHGRVTQASVKNFQLVHDSDPEYIVMQFGRTADDIFTMDFRYPLCAFQAFAIALSSFDGKLACE.

Composition is skewed to low complexity over residues 71 to 92 (GTGPNVTATSITTTPTSPYSDS) and 157 to 169 (NNNNHTHHTNSSS). The segment at 71 to 196 (GTGPNVTATS…GGAPDTEGDV (126 aa)) is disordered.

It belongs to the TUB family.

The protein localises to the cytoplasm. It is found in the nucleus. This chain is Protein king tubby, found in Anopheles gambiae (African malaria mosquito).